A 470-amino-acid chain; its full sequence is Regulator of microtubule dynamics protein 3 (470 aa).

Over 1 to 12 the chain is Mitochondrial intermembrane; the sequence is MSRLGALGGSRA. The helical transmembrane segment at 13–35 threads the bilayer; that stretch reads GLGLLLGTAAGLGFLCVLYSQRW. Over 36-470 the chain is Cytoplasmic; sequence KRTQRHGRSH…DLEELEVILG (435 aa). 4 positions are modified to phosphoserine: S44, S46, S50, and S57. Residues 91–125 are a coiled coil; that stretch reads LDRLDFVLTSLMALRREVEELQRSLQGLAGEIVGE. Positions 157–163 match the FFAT motif; it reads VYFTASS. T160 is modified (phosphothreonine). Residues 168 to 205 are disordered; it reads TDAESEGGYTTANAESDYERDSDKESGDAEDEVSCETV. S183, S193, S212, and S233 each carry phosphoserine. Residues 184–194 are compositionally biased toward basic and acidic residues; the sequence is DYERDSDKESG.

Belongs to the RMDN family. As to quaternary structure, interacts with PTPN2. Interacts with microtubules. Interacts with VAPB. Interacts (via FFAT motif) with MOSPD2 (via MSP domain). Interacts (via phosphorylated FFAT motif) with MOSPD2, VAPA and VAPB. In terms of processing, phosphorylation at Thr-160 of the FFAT motif activates interaction with MOSPD2, VAPA and VAPB.

It localises to the mitochondrion outer membrane. The protein resides in the cytoplasm. Its subcellular location is the nucleus. The protein localises to the cytoskeleton. It is found in the spindle. It localises to the spindle pole. Its function is as follows. Involved in cellular calcium homeostasis regulation. May participate in differentiation and apoptosis of keratinocytes. Overexpression induces apoptosis. This is Regulator of microtubule dynamics protein 3 from Mus musculus (Mouse).